Reading from the N-terminus, the 147-residue chain is Thyrotropin subunit beta (147 aa).

Residues 1–20 (MRVVLLASAVLCLLAGQVLS) form the signal peptide. 6 cysteine pairs are disulfide-bonded: C22/C72, C36/C87, C39/C126, C47/C103, C51/C105, and C108/C115. N43 is a glycosylation site (N-linked (GlcNAc...) asparagine).

It belongs to the glycoprotein hormones subunit beta family. Heterodimer of a common alpha chain and a unique beta chain which confers biological specificity to thyrotropin, lutropin, follitropin and gonadotropin.

It localises to the secreted. Its function is as follows. Indispensable for the control of thyroid structure and metabolism. May play some role in the biological processes of the immature fishes. The sequence is that of Thyrotropin subunit beta (tshb) from Anguilla anguilla (European freshwater eel).